The chain runs to 246 residues: Ribonuclease 3 (246 aa).

Residues 10-135 (LENFLTLNNI…FVAAIYLDLG (126 aa)) form the RNase III domain. Residue Glu50 coordinates Mg(2+). Asp54 is a catalytic residue. Residues Asp121 and Glu124 each contribute to the Mg(2+) site. The active site involves Glu124. In terms of domain architecture, DRBM spans 161 to 230 (DPKSSFQEYI…ATRALETLKA (70 aa)).

The protein belongs to the ribonuclease III family. As to quaternary structure, homodimer. Mg(2+) serves as cofactor.

The protein localises to the cytoplasm. It carries out the reaction Endonucleolytic cleavage to 5'-phosphomonoester.. Its function is as follows. Digests double-stranded RNA. Involved in the processing of primary rRNA transcript to yield the immediate precursors to the large and small rRNAs (23S and 16S). Processes some mRNAs, and tRNAs when they are encoded in the rRNA operon. Processes pre-crRNA and tracrRNA of type II CRISPR loci if present in the organism. In Mycoplasma mobile (strain ATCC 43663 / 163K / NCTC 11711) (Mesomycoplasma mobile), this protein is Ribonuclease 3.